We begin with the raw amino-acid sequence, 134 residues long: Phosphoribosyl-AMP cyclohydrolase (134 aa).

Aspartate 77 is a binding site for Mg(2+). Position 78 (cysteine 78) interacts with Zn(2+). Residues aspartate 79 and aspartate 81 each coordinate Mg(2+). Zn(2+)-binding residues include cysteine 95 and cysteine 102.

The protein belongs to the PRA-CH family. As to quaternary structure, homodimer. Requires Mg(2+) as cofactor. The cofactor is Zn(2+).

It localises to the cytoplasm. It catalyses the reaction 1-(5-phospho-beta-D-ribosyl)-5'-AMP + H2O = 1-(5-phospho-beta-D-ribosyl)-5-[(5-phospho-beta-D-ribosylamino)methylideneamino]imidazole-4-carboxamide. The protein operates within amino-acid biosynthesis; L-histidine biosynthesis; L-histidine from 5-phospho-alpha-D-ribose 1-diphosphate: step 3/9. Its function is as follows. Catalyzes the hydrolysis of the adenine ring of phosphoribosyl-AMP. This is Phosphoribosyl-AMP cyclohydrolase from Pseudomonas aeruginosa (strain LESB58).